The following is a 323-amino-acid chain: Annexin A3 (323 aa).

A2 bears the N-acetylalanine mark. Annexin repeat units follow at residues 18–89 (FSPS…ALVT), 90–161 (APAL…TLAD), 173–245 (HLAK…AIVH), and 249–320 (NTPA…KICG). At K177 the chain carries N6-acetyllysine. Phosphothreonine is present on T267.

The protein belongs to the annexin family.

Functionally, inhibitor of phospholipase A2, also possesses anti-coagulant properties. The protein is Annexin A3 (Anxa3) of Mus musculus (Mouse).